The primary structure comprises 601 residues: Elongation factor 4 (601 aa).

The region spanning Ser-6–Glu-188 is the tr-type G domain. GTP-binding positions include Asp-18 to Thr-23 and Asn-135 to Asp-138.

It belongs to the TRAFAC class translation factor GTPase superfamily. Classic translation factor GTPase family. LepA subfamily.

It is found in the cell inner membrane. It catalyses the reaction GTP + H2O = GDP + phosphate + H(+). Required for accurate and efficient protein synthesis under certain stress conditions. May act as a fidelity factor of the translation reaction, by catalyzing a one-codon backward translocation of tRNAs on improperly translocated ribosomes. Back-translocation proceeds from a post-translocation (POST) complex to a pre-translocation (PRE) complex, thus giving elongation factor G a second chance to translocate the tRNAs correctly. Binds to ribosomes in a GTP-dependent manner. The polypeptide is Elongation factor 4 (Anaeromyxobacter dehalogenans (strain 2CP-1 / ATCC BAA-258)).